The sequence spans 173 residues: Crossover junction endodeoxyribonuclease RuvC (173 aa).

Residues D8, E67, and D139 contribute to the active site. Mg(2+) contacts are provided by D8, E67, and D139.

The protein belongs to the RuvC family. As to quaternary structure, homodimer which binds Holliday junction (HJ) DNA. The HJ becomes 2-fold symmetrical on binding to RuvC with unstacked arms; it has a different conformation from HJ DNA in complex with RuvA. In the full resolvosome a probable DNA-RuvA(4)-RuvB(12)-RuvC(2) complex forms which resolves the HJ. Mg(2+) serves as cofactor.

Its subcellular location is the cytoplasm. The enzyme catalyses Endonucleolytic cleavage at a junction such as a reciprocal single-stranded crossover between two homologous DNA duplexes (Holliday junction).. Its function is as follows. The RuvA-RuvB-RuvC complex processes Holliday junction (HJ) DNA during genetic recombination and DNA repair. Endonuclease that resolves HJ intermediates. Cleaves cruciform DNA by making single-stranded nicks across the HJ at symmetrical positions within the homologous arms, yielding a 5'-phosphate and a 3'-hydroxyl group; requires a central core of homology in the junction. The consensus cleavage sequence is 5'-(A/T)TT(C/G)-3'. Cleavage occurs on the 3'-side of the TT dinucleotide at the point of strand exchange. HJ branch migration catalyzed by RuvA-RuvB allows RuvC to scan DNA until it finds its consensus sequence, where it cleaves and resolves the cruciform DNA. This Aliivibrio salmonicida (strain LFI1238) (Vibrio salmonicida (strain LFI1238)) protein is Crossover junction endodeoxyribonuclease RuvC.